A 576-amino-acid chain; its full sequence is Apolipoprotein N-acyltransferase 1 (576 aa).

7 consecutive transmembrane segments (helical) span residues 15–35 (LILC…FSFF), 38–58 (GVFA…TSIW), 60–80 (AFLW…YWIP), 92–112 (FVSI…FFLF), 128–148 (YILL…FQIF), 168–188 (ICGV…FLIL), and 204–224 (IASL…IGYI). One can recognise a CN hydrolase domain in the interval 236-538 (LSVLMIQPDT…TGTRAFSIRL (303 aa)). Glutamate 285 serves as the catalytic Proton acceptor. Lysine 355 is a catalytic residue. Residue cysteine 446 is the Nucleophile of the active site. The helical transmembrane segment at 549–569 (FGNSFLWIFCILILISRLIFV) threads the bilayer.

Belongs to the CN hydrolase family. Apolipoprotein N-acyltransferase subfamily.

The protein localises to the cell inner membrane. It carries out the reaction N-terminal S-1,2-diacyl-sn-glyceryl-L-cysteinyl-[lipoprotein] + a glycerophospholipid = N-acyl-S-1,2-diacyl-sn-glyceryl-L-cysteinyl-[lipoprotein] + a 2-acyl-sn-glycero-3-phospholipid + H(+). It participates in protein modification; lipoprotein biosynthesis (N-acyl transfer). In terms of biological role, catalyzes the phospholipid dependent N-acylation of the N-terminal cysteine of apolipoprotein, the last step in lipoprotein maturation. This is Apolipoprotein N-acyltransferase 1 from Leptospira interrogans serogroup Icterohaemorrhagiae serovar copenhageni (strain Fiocruz L1-130).